Reading from the N-terminus, the 261-residue chain is Carnitinyl-CoA dehydratase (261 aa).

Catalysis depends on Glu111, which acts as the Nucleophile. The Proton acceptor role is filled by Glu131.

It belongs to the enoyl-CoA hydratase/isomerase family.

It carries out the reaction (R)-carnitinyl-CoA = crotonobetainyl-CoA + H2O. The protein operates within amine and polyamine metabolism; carnitine metabolism. Its function is as follows. Catalyzes the reversible dehydration of L-carnitinyl-CoA to crotonobetainyl-CoA. This chain is Carnitinyl-CoA dehydratase, found in Salmonella paratyphi C (strain RKS4594).